Here is a 148-residue protein sequence, read N- to C-terminus: 3-dehydroquinate dehydratase (148 aa).

Tyrosine 26 serves as the catalytic Proton acceptor. Residues asparagine 77, histidine 83, and aspartate 90 each contribute to the substrate site. Residue histidine 103 is the Proton donor of the active site. Substrate-binding positions include 104 to 105 and arginine 114; that span reads LS.

The protein belongs to the type-II 3-dehydroquinase family. Homododecamer.

It carries out the reaction 3-dehydroquinate = 3-dehydroshikimate + H2O. It participates in metabolic intermediate biosynthesis; chorismate biosynthesis; chorismate from D-erythrose 4-phosphate and phosphoenolpyruvate: step 3/7. Functionally, catalyzes a trans-dehydration via an enolate intermediate. The sequence is that of 3-dehydroquinate dehydratase from Chlorobaculum tepidum (strain ATCC 49652 / DSM 12025 / NBRC 103806 / TLS) (Chlorobium tepidum).